Consider the following 1486-residue polypeptide: Chromosome partition protein MukB (1486 aa).

34–41 (GGNGAGKS) contacts ATP. Coiled-coil stretches lie at residues 326-418 (LEAD…QYNQ), 444-480 (LETF…QAYQ), and 509-603 (RHLA…RAPV). The segment at 666–783 (PGGSEDQRLN…EVPLFGRAAR (118 aa)) is flexible hinge. 3 coiled-coil regions span residues 835 to 923 (EAEI…AKLE), 977 to 1115 (EMLS…TAKA), and 1209 to 1266 (VEAI…QNVS).

The protein belongs to the SMC family. MukB subfamily. In terms of assembly, homodimerization via its hinge domain. Binds to DNA via its C-terminal region. Interacts, and probably forms a ternary complex, with MukE and MukF via its C-terminal region. The complex formation is stimulated by calcium or magnesium. Interacts with tubulin-related protein FtsZ.

It localises to the cytoplasm. The protein localises to the nucleoid. Its function is as follows. Plays a central role in chromosome condensation, segregation and cell cycle progression. Functions as a homodimer, which is essential for chromosome partition. Involved in negative DNA supercoiling in vivo, and by this means organize and compact chromosomes. May achieve or facilitate chromosome segregation by condensation DNA from both sides of a centrally located replisome during cell division. This is Chromosome partition protein MukB from Escherichia coli O9:H4 (strain HS).